We begin with the raw amino-acid sequence, 238 residues long: Enoyl-CoA delta isomerase 3 (238 aa).

Belongs to the enoyl-CoA hydratase/isomerase family.

It localises to the cytoplasm. It is found in the nucleus. It catalyses the reaction a (3Z)-enoyl-CoA = a 4-saturated (2E)-enoyl-CoA. It carries out the reaction a (3E)-enoyl-CoA = a 4-saturated (2E)-enoyl-CoA. The protein operates within lipid metabolism; fatty acid beta-oxidation. In terms of biological role, able to isomerize both 3-cis and 3-trans double bonds into the 2-trans form in a range of enoyl-CoA species. Essential for the beta oxidation of unsaturated fatty acids. This is Enoyl-CoA delta isomerase 3 from Arabidopsis thaliana (Mouse-ear cress).